The sequence spans 164 residues: Phosphopantetheine adenylyltransferase (164 aa).

Position 9 (serine 9) interacts with substrate. ATP is bound by residues 9-10 (SF) and histidine 17. 3 residues coordinate substrate: lysine 41, leucine 73, and lysine 87. ATP contacts are provided by residues 88-90 (GLR), glutamate 98, and 123-129 (YSYISSS).

It belongs to the bacterial CoaD family. As to quaternary structure, homohexamer. Requires Mg(2+) as cofactor.

It localises to the cytoplasm. It catalyses the reaction (R)-4'-phosphopantetheine + ATP + H(+) = 3'-dephospho-CoA + diphosphate. The protein operates within cofactor biosynthesis; coenzyme A biosynthesis; CoA from (R)-pantothenate: step 4/5. In terms of biological role, reversibly transfers an adenylyl group from ATP to 4'-phosphopantetheine, yielding dephospho-CoA (dPCoA) and pyrophosphate. In Clostridium perfringens (strain SM101 / Type A), this protein is Phosphopantetheine adenylyltransferase.